The chain runs to 1370 residues: DNA polymerase II large subunit (1370 aa).

Disordered stretches follow at residues 279-317 (IGAD…PRAA) and 1041-1081 (AGDA…DGGS).

Belongs to the archaeal DNA polymerase II family. In terms of assembly, heterodimer of a large subunit and a small subunit. In terms of processing, this protein undergoes a protein self splicing that involves a post-translational excision of the intervening region (intein) followed by peptide ligation.

The enzyme catalyses DNA(n) + a 2'-deoxyribonucleoside 5'-triphosphate = DNA(n+1) + diphosphate. It catalyses the reaction Exonucleolytic cleavage in the 3'- to 5'-direction to yield nucleoside 5'-phosphates.. Functionally, possesses two activities: a DNA synthesis (polymerase) and an exonucleolytic activity that degrades single-stranded DNA in the 3'- to 5'-direction. Has a template-primer preference which is characteristic of a replicative DNA polymerase. The sequence is that of DNA polymerase II large subunit (polC) from Halobacterium salinarum (strain ATCC 700922 / JCM 11081 / NRC-1) (Halobacterium halobium).